A 153-amino-acid polypeptide reads, in one-letter code: UPF0178 protein Ccel_2994 (153 aa).

It belongs to the UPF0178 family.

This Ruminiclostridium cellulolyticum (strain ATCC 35319 / DSM 5812 / JCM 6584 / H10) (Clostridium cellulolyticum) protein is UPF0178 protein Ccel_2994.